Here is a 405-residue protein sequence, read N- to C-terminus: F-box/kelch-repeat protein At2g43445 (405 aa).

Residues 7-53 (NTNSIYIVSELLEEIFLGLPLKSILKFKTVSKQWRSILESNLFVERR) enclose the F-box domain. Kelch repeat units lie at residues 146-197 (RDKV…CVNG) and 356-400 (THHD…VVGY).

The chain is F-box/kelch-repeat protein At2g43445 from Arabidopsis thaliana (Mouse-ear cress).